The sequence spans 482 residues: Argininosuccinate synthase (482 aa).

Residues 17-25 (AFSGGLDTS) and A43 contribute to the ATP site. Y99 is a binding site for L-citrulline. Positions 129 and 131 each coordinate ATP. 3 residues coordinate L-aspartate: T131, N135, and D136. N135 contacts L-citrulline. D136 contributes to the ATP binding site. L-citrulline contacts are provided by R139 and S192. D194 contacts ATP. Residues T201, E203, and E280 each contribute to the L-citrulline site. The disordered stretch occupies residues 461-482 (SRGEATDEETMLDRAAMESGTD).

This sequence belongs to the argininosuccinate synthase family. Type 2 subfamily. Homotetramer.

Its subcellular location is the cytoplasm. The enzyme catalyses L-citrulline + L-aspartate + ATP = 2-(N(omega)-L-arginino)succinate + AMP + diphosphate + H(+). Its pathway is amino-acid biosynthesis; L-arginine biosynthesis; L-arginine from L-ornithine and carbamoyl phosphate: step 2/3. The protein is Argininosuccinate synthase (argG) of Streptomyces lavendulae.